A 313-amino-acid chain; its full sequence is WD repeat-containing protein 82 (313 aa).

WD repeat units lie at residues 19-58 (ENSD…PKRT), 105-144 (GHSK…CQGL), 146-184 (HLQG…KGPF), 192-231 (DRTC…VMHT), 236-276 (NNSK…KVAV), and 280-313 (KHTG…TIDD).

The protein belongs to the WD repeat SWD2 family. Component of the SET1/COMPASS complex. Component of the PNUTS-PP1 phosphatase complex.

It localises to the nucleus. Its subcellular location is the chromosome. The protein resides in the cytoplasm. Regulatory component of the SET1/COMPASS complex implicated in the tethering of this complex to transcriptional start sites of active genes. Facilitates histone H3 'Lys-4' methylation (H3K4me) via recruitment of the SETD1A or SETD1B to the 'Ser-5' phosphorylated C-terminal domain (CTD) of RNA polymerase II large subunit (POLR2A). Component of the PNUTS-PP1 protein phosphatase complex, a protein phosphatase 1 (PP1) complex that promotes RNA polymerase II transcription pause-release, allowing transcription elongation. The polypeptide is WD repeat-containing protein 82 (wdr82) (Xenopus tropicalis (Western clawed frog)).